The chain runs to 209 residues: Kynurenine formamidase (209 aa).

W20 contributes to the substrate binding site. Residues H50, H54, and D56 each contribute to the Zn(2+) site. Catalysis depends on H60, which acts as the Proton donor/acceptor. Zn(2+) is bound by residues H161 and E173.

The protein belongs to the Cyclase 1 superfamily. KynB family. In terms of assembly, homodimer. Zn(2+) serves as cofactor.

The catalysed reaction is N-formyl-L-kynurenine + H2O = L-kynurenine + formate + H(+). Its pathway is amino-acid degradation; L-tryptophan degradation via kynurenine pathway; L-kynurenine from L-tryptophan: step 2/2. Functionally, catalyzes the hydrolysis of N-formyl-L-kynurenine to L-kynurenine, the second step in the kynurenine pathway of tryptophan degradation. This chain is Kynurenine formamidase, found in Bacillus anthracis.